The chain runs to 258 residues: 5'-nucleotidase SurE (258 aa).

A divalent metal cation is bound by residues D9, D10, S42, and N96.

This sequence belongs to the SurE nucleotidase family. It depends on a divalent metal cation as a cofactor.

The protein resides in the cytoplasm. The catalysed reaction is a ribonucleoside 5'-phosphate + H2O = a ribonucleoside + phosphate. Nucleotidase that shows phosphatase activity on nucleoside 5'-monophosphates. The chain is 5'-nucleotidase SurE from Campylobacter jejuni subsp. doylei (strain ATCC BAA-1458 / RM4099 / 269.97).